The primary structure comprises 310 residues: NADH-cytochrome b5 reductase 1 (310 aa).

The chain crosses the membrane as a helical span at residues 30-50 (WVPFAVALAAGFVAWKLSVGG). The FAD-binding FR-type domain occupies 61-166 (NEFQNFVLKE…RGPKGAMVYT (106 aa)). FAD is bound by residues 146 to 160 (TTLK…RGPK) and 172 to 209 (HIGM…QVDL).

Belongs to the flavoprotein pyridine nucleotide cytochrome reductase family. Monomer. Component of the 2-(3-amino-3-carboxypropyl)histidine synthase complex composed of dph1, dph2, dph3 and a NADH-dependent reductase, predominantly cbr1. FAD serves as cofactor.

It is found in the mitochondrion outer membrane. The enzyme catalyses 2 Fe(III)-[cytochrome b5] + NADH = 2 Fe(II)-[cytochrome b5] + NAD(+) + H(+). It catalyses the reaction 2 Fe(3+)-[Dph3] + NADH = 2 Fe(2+)-[Dph3] + NAD(+) + H(+). The protein operates within protein modification; peptidyl-diphthamide biosynthesis. Functionally, NADH-dependent reductase for dph3 and cytochrome b5. Required for the first step of diphthamide biosynthesis, a post-translational modification of histidine which occurs in elongation factor 2. Dph1 and dph2 transfer a 3-amino-3-carboxypropyl (ACP) group from S-adenosyl-L-methionine (SAM) to a histidine residue, the reaction is assisted by a reduction system comprising dph3 and a NADH-dependent reductase, predominantly cbr1. By reducing dph3, also involved in the formation of the tRNA wobble base modification mcm5s 2U (5-methoxycarbonylmethyl-2-thiouridine), mediated by the elongator complex. The cytochrome b5/NADH cytochrome b5 reductase electron transfer system supports the catalytic activity of several sterol biosynthetic enzymes. The protein is NADH-cytochrome b5 reductase 1 (cbr1) of Emericella nidulans (strain FGSC A4 / ATCC 38163 / CBS 112.46 / NRRL 194 / M139) (Aspergillus nidulans).